A 341-amino-acid chain; its full sequence is Phosphoribosylformylglycinamidine cyclo-ligase (341 aa).

The protein belongs to the AIR synthase family.

The protein localises to the cytoplasm. The catalysed reaction is 2-formamido-N(1)-(5-O-phospho-beta-D-ribosyl)acetamidine + ATP = 5-amino-1-(5-phospho-beta-D-ribosyl)imidazole + ADP + phosphate + H(+). The protein operates within purine metabolism; IMP biosynthesis via de novo pathway; 5-amino-1-(5-phospho-D-ribosyl)imidazole from N(2)-formyl-N(1)-(5-phospho-D-ribosyl)glycinamide: step 2/2. The sequence is that of Phosphoribosylformylglycinamidine cyclo-ligase from Caldicellulosiruptor bescii (strain ATCC BAA-1888 / DSM 6725 / KCTC 15123 / Z-1320) (Anaerocellum thermophilum).